The chain runs to 674 residues: Multifunctional alkene reductase/demethylase OYE (674 aa).

Residues Gly-62 and Gln-105 each contribute to the FMN site. His-175 functions as the Proton donor in the catalytic mechanism. Residues Arg-223 and Lys-299 each coordinate FMN. [4Fe-4S] cluster-binding residues include Cys-345, Cys-351, and Cys-358. Residues Ala-391, Gln-418, and Arg-428 each contribute to the FAD site.

In the N-terminal section; belongs to the NADH:flavin oxidoreductase/NADH oxidase family. It depends on [4Fe-4S] cluster as a cofactor. The cofactor is FAD. FMN is required as a cofactor.

It catalyses the reaction 3-phenylpropanoate + NAD(+) = (E)-cinnamate + NADH + H(+). The enzyme catalyses N-methyl-L-proline + NAD(+) + H2O = L-proline + formaldehyde + NADH + H(+). A member of the 2-enoate reductase subfamily of old yellow enzymes (OYE) able to reduce alpha/beta alkenes near electron-withdrawing groups as well as perform oxidative demethylation chemistry. Prefers NADH over NADPH as cosubstrate. May play a role in osmotic stress response in situ. The chain is Multifunctional alkene reductase/demethylase OYE from Caballeronia cordobensis (Burkholderia cordobensis).